Reading from the N-terminus, the 195-residue chain is HTH-type transcriptional regulator BetI (195 aa).

Residues 8–68 enclose the HTH tetR-type domain; it reads SIRRRQLIDA…ATMRDITSQL (61 aa). The H-T-H motif DNA-binding region spans 31-50; sequence TIAQIARRAGVSTGIISHYF.

It participates in amine and polyamine biosynthesis; betaine biosynthesis via choline pathway [regulation]. Repressor involved in the biosynthesis of the osmoprotectant glycine betaine. It represses transcription of the choline transporter BetT and the genes of BetAB involved in the synthesis of glycine betaine. The protein is HTH-type transcriptional regulator BetI of Escherichia coli (strain UTI89 / UPEC).